We begin with the raw amino-acid sequence, 611 residues long: uncharacterized protein (611 aa).

This sequence belongs to the metallo-dependent hydrolases superfamily. N-acyl-D-amino-acid deacylase family.

This is an uncharacterized protein from Mycobacterium bovis (strain ATCC BAA-935 / AF2122/97).